The sequence spans 455 residues: Ribulose bisphosphate carboxylase large chain (455 aa).

Lys-5 carries the N6,N6,N6-trimethyllysine modification. Residues Asn-114 and Thr-164 each coordinate substrate. Lys-166 functions as the Proton acceptor in the catalytic mechanism. Position 168 (Lys-168) interacts with substrate. 3 residues coordinate Mg(2+): Lys-192, Asp-194, and Glu-195. Lys-192 carries the N6-carboxylysine modification. Catalysis depends on His-285, which acts as the Proton acceptor. Residues Arg-286, His-318, and Ser-370 each coordinate substrate.

The protein belongs to the RuBisCO large chain family. Type I subfamily. As to quaternary structure, heterohexadecamer of 8 large chains and 8 small chains; disulfide-linked. The disulfide link is formed within the large subunit homodimers. Mg(2+) serves as cofactor. The disulfide bond which can form in the large chain dimeric partners within the hexadecamer appears to be associated with oxidative stress and protein turnover.

It is found in the plastid. Its subcellular location is the chloroplast. The enzyme catalyses 2 (2R)-3-phosphoglycerate + 2 H(+) = D-ribulose 1,5-bisphosphate + CO2 + H2O. It carries out the reaction D-ribulose 1,5-bisphosphate + O2 = 2-phosphoglycolate + (2R)-3-phosphoglycerate + 2 H(+). Functionally, ruBisCO catalyzes two reactions: the carboxylation of D-ribulose 1,5-bisphosphate, the primary event in carbon dioxide fixation, as well as the oxidative fragmentation of the pentose substrate in the photorespiration process. Both reactions occur simultaneously and in competition at the same active site. The chain is Ribulose bisphosphate carboxylase large chain from Lupinus nanus (Sky lupine).